The sequence spans 43 residues: Bacteriocin leucocin-C (43 aa).

A disulfide bridge connects residues cysteine 9 and cysteine 14.

The protein resides in the secreted. Its function is as follows. Inhibits a wide spectrum of lactic acid bacteria. The sequence is that of Bacteriocin leucocin-C from Leuconostoc mesenteroides.